A 282-amino-acid chain; its full sequence is Blarina toxin (282 aa).

A signal peptide spans 1–17 (MCFLLLCLTLTLAGTGA). A propeptide spans 18-29 (VPTGPSIEIHSR) (activation peptide). In terms of domain architecture, Peptidase S1 spans 30–279 (IIGGWECDKH…YISWIQETIK (250 aa)). Disulfide bonds link Cys36–Cys194, Cys57–Cys73, Cys170–Cys240, Cys205–Cys219, and Cys230–Cys255. His72 functions as the Charge relay system in the catalytic mechanism. An O-linked (GalNAc...) serine glycan is attached at Ser100. Asn109 and Asn122 each carry an N-linked (GlcNAc...) asparagine glycan. Asp138 (charge relay system) is an active-site residue. Ser234 functions as the Charge relay system in the catalytic mechanism.

It belongs to the peptidase S1 family. Kallikrein subfamily. In terms of tissue distribution, submaxillary and sublingual salivary glands.

It localises to the secreted. With respect to regulation, strongly inhibited by aprotinin, moderately inhibited by secretory leukoprotease inhibitor, the Kunitz-type soybean trypsin inhibitor, and leupeptin, and not inhibited by urinary trypsin inhibitor or alpha-1 protease inhibitor. Its function is as follows. Has kallikrein-like activity, converts kininogens to kinins, and has dilatory effects on the blood vessel walls. Shows highest activity toward Pro-Phe-Arg-MCA and Boc-Val-Leu-Lys-MCA in vitro. Has preference for Arg and Lys in position P1 and hydrophobic residues in position P2. The protein is Blarina toxin (BTX) of Blarina brevicauda (Northern short-tailed shrew).